Here is a 375-residue protein sequence, read N- to C-terminus: Membrane progesterone receptor epsilon (375 aa).

Residues 1-39 are disordered; that stretch reads MPRRLQQRGAGVKGPPASTSRRSHPASASAPRSPPAATT. Residues 1 to 84 are Cytoplasmic-facing; it reads MPRRLQQRGA…VLKPTNETLN (84 aa). Low complexity predominate over residues 15-39; it reads PPASTSRRSHPASASAPRSPPAATT. The helical transmembrane segment at 85–105 threads the bilayer; it reads FWTHFIPLLLFLSKFCRLFFL. The Extracellular segment spans residues 106 to 114; it reads GGSDVPFHH. The helical transmembrane segment at 115-135 threads the bilayer; the sequence is PWLLPLWCYASGVLLTFAMSC. The Cytoplasmic segment spans residues 136 to 160; the sequence is TAHVFSCLSLRLRAAFFYLDYASIS. Residues 161-181 form a helical membrane-spanning segment; that stretch reads YYGFGSTVAYYYYLLPSLSLL. The Extracellular segment spans residues 182–203; that stretch reads DARVMTPYVQQRLGWHVDCTRL. Residues 204–224 traverse the membrane as a helical segment; the sequence is IAVYRALVLPVAFVLAVACTV. At 225–241 the chain is on the cytoplasmic side; sequence ACCKSRTDWCSYPFALR. Residues 242 to 262 traverse the membrane as a helical segment; the sequence is TFVFVMPLSMACPIMLESWLF. At 263 to 299 the chain is on the extracellular side; the sequence is DLRGENPTLFVHFYRRYFWLVVAAFFNVSKIPERIQP. The chain crosses the membrane as a helical span at residues 300–320; that stretch reads GLFDIIGHSHQLFHIFTFLSI. Topologically, residues 321–341 are cytoplasmic; it reads YDQVYYVEEGLRQFLQAPPAA. The chain crosses the membrane as a helical span at residues 342–362; it reads PTFSGTVGYMLLLVVCLGLVI. The Extracellular portion of the chain corresponds to 363–375; that stretch reads RKFLNSTEFCSKK.

It belongs to the ADIPOR family. In terms of assembly, homodimer.

It localises to the cell membrane. Functionally, plasma membrane progesterone (P4) receptor coupled to G proteins. Seems to act through a G(s) mediated pathway. May be involved in regulating rapid P4 signaling in the nervous system. Also binds dehydroepiandrosterone (DHEA), pregnanolone, pregnenolone and allopregnanolone. This chain is Membrane progesterone receptor epsilon, found in Mus musculus (Mouse).